Here is a 200-residue protein sequence, read N- to C-terminus: Recombination protein RecR (200 aa).

Residues 57–72 (CRQCRTLTEDELCPQC) form a C4-type zinc finger. Positions 80–175 (TLLCVVEGPM…ITSRIAHGVP (96 aa)) constitute a Toprim domain.

The protein belongs to the RecR family.

Its function is as follows. May play a role in DNA repair. It seems to be involved in an RecBC-independent recombinational process of DNA repair. It may act with RecF and RecO. The sequence is that of Recombination protein RecR from Pseudomonas fluorescens (strain ATCC BAA-477 / NRRL B-23932 / Pf-5).